The following is an 86-amino-acid chain: Anti-adapter protein IraP (86 aa).

Positions 1-36 (MKNLIAELLFKLAQKEEESKELCAQVEALEIIVTAM) form a coiled coil.

This sequence belongs to the IraP family. Interacts with RssB.

It is found in the cytoplasm. Functionally, inhibits RpoS proteolysis by regulating RssB activity, thereby increasing the stability of the sigma stress factor RpoS especially during phosphate starvation, but also in stationary phase and during nitrogen starvation. Its effect on RpoS stability is due to its interaction with RssB, which probably blocks the interaction of RssB with RpoS, and the consequent delivery of the RssB-RpoS complex to the ClpXP protein degradation pathway. This chain is Anti-adapter protein IraP, found in Escherichia coli O127:H6 (strain E2348/69 / EPEC).